We begin with the raw amino-acid sequence, 305 residues long: Oxygen-dependent coproporphyrinogen-III oxidase (305 aa).

Ser98 is a binding site for substrate. His102 and His112 together coordinate a divalent metal cation. His112 functions as the Proton donor in the catalytic mechanism. 114–116 contributes to the substrate binding site; the sequence is NVR. The a divalent metal cation site is built by His151 and His181. The interval 246–281 is important for dimerization; it reads YVEFNLVYDRGTLFGLQSGGRTESILMSMPPLARWE. Position 264 to 266 (264 to 266) interacts with substrate; that stretch reads GGR.

This sequence belongs to the aerobic coproporphyrinogen-III oxidase family. In terms of assembly, homodimer. It depends on a divalent metal cation as a cofactor.

It localises to the cytoplasm. It carries out the reaction coproporphyrinogen III + O2 + 2 H(+) = protoporphyrinogen IX + 2 CO2 + 2 H2O. Its pathway is porphyrin-containing compound metabolism; protoporphyrin-IX biosynthesis; protoporphyrinogen-IX from coproporphyrinogen-III (O2 route): step 1/1. In terms of biological role, involved in the heme biosynthesis. Catalyzes the aerobic oxidative decarboxylation of propionate groups of rings A and B of coproporphyrinogen-III to yield the vinyl groups in protoporphyrinogen-IX. The chain is Oxygen-dependent coproporphyrinogen-III oxidase from Vibrio vulnificus (strain CMCP6).